A 137-amino-acid chain; its full sequence is Large ribosomal subunit protein uL16 (137 aa).

Belongs to the universal ribosomal protein uL16 family. As to quaternary structure, part of the 50S ribosomal subunit.

Functionally, binds 23S rRNA and is also seen to make contacts with the A and possibly P site tRNAs. This chain is Large ribosomal subunit protein uL16, found in Mesoplasma florum (strain ATCC 33453 / NBRC 100688 / NCTC 11704 / L1) (Acholeplasma florum).